Here is a 373-residue protein sequence, read N- to C-terminus: Cystathionine gamma-synthase/O-acetylhomoserine (thiol)-lyase (373 aa).

The residue at position 197 (Lys197) is an N6-(pyridoxal phosphate)lysine.

The protein belongs to the trans-sulfuration enzymes family. In terms of assembly, homotetramer. It depends on pyridoxal 5'-phosphate as a cofactor.

Its subcellular location is the cytoplasm. It catalyses the reaction O-acetyl-L-homoserine + L-cysteine = L,L-cystathionine + acetate + H(+). It carries out the reaction O-acetyl-L-homoserine + hydrogen sulfide = L-homocysteine + acetate. The protein operates within amino-acid biosynthesis; L-methionine biosynthesis via de novo pathway. Catalyzes the formation of L-cystathionine from O-acetyl-L-homoserine and L-cysteine. Cannot use O-succinyl-L-homoserine as substrate. Also exhibits O-acetylhomoserine thiolyase activity, catalyzing the synthesis of L-homocysteine from O-acetyl-L-homoserine and sulfide. This Bacillus subtilis (strain 168) protein is Cystathionine gamma-synthase/O-acetylhomoserine (thiol)-lyase (metI).